The sequence spans 51 residues: Ovomucoid (51 aa).

One can recognise a Kazal-like domain in the interval Val-3 to Cys-51. Disulfide bonds link Cys-5–Cys-35, Cys-13–Cys-32, and Cys-21–Cys-51. A glycan (N-linked (GlcNAc...) asparagine) is linked at Asn-42.

It localises to the secreted. The chain is Ovomucoid from Nothoprocta cinerascens (Brushland tinamou).